The following is a 395-amino-acid chain: Prostaglandin D2 receptor 2 (395 aa).

At 1–33 the chain is on the extracellular side; it reads MSANATLKPLCPILEQMSRLQSHSNTSIRYIDH. Residues N4 and N25 are each glycosylated (N-linked (GlcNAc...) asparagine). Residues 34–56 traverse the membrane as a helical segment; it reads AAVLLHGLASLLGLVENGVILFV. Topologically, residues 57 to 67 are cytoplasmic; that stretch reads VGCRMRQTVVT. A helical membrane pass occupies residues 68–89; the sequence is TWVLHLALSDLLASASLPFFTY. At 90-106 the chain is on the extracellular side; that stretch reads FLAVGHSWELGTTFCKL. C104 and C182 are oxidised to a cystine. The chain crosses the membrane as a helical span at residues 107–127; the sequence is HSSIFFLNMFASGFLLSAISL. Topologically, residues 128 to 146 are cytoplasmic; the sequence is DRCLQVVRPVWAQNHRTVA. Residues 147–168 traverse the membrane as a helical segment; sequence AAHKVCLVLWALAVLNTVPYFV. The Extracellular portion of the chain corresponds to 169–210; sequence FRDTISRLDGRIMCYYNVLLLNPGPDRDATCNSRQVALAVSK. The chain crosses the membrane as a helical span at residues 211-231; that stretch reads FLLAFLVPLAIIASSHAAVSL. Topologically, residues 232–247 are cytoplasmic; the sequence is RLQHRGRRRPGRFVRL. The chain crosses the membrane as a helical span at residues 248 to 269; sequence VAAVVAAFALCWGPYHVFSLLE. The Extracellular portion of the chain corresponds to 270-288; the sequence is ARAHANPGLRPLVWRGLPF. Residues 289–308 traverse the membrane as a helical segment; the sequence is VTSLAFFNSVANPVLYVLTC. At 309–395 the chain is on the cytoplasmic side; that stretch reads PDMLRKLRRS…LNRALSSTSS (87 aa). Residues 330 to 333 carry the Involved in the recycling of CRTH2 motif; the sequence is DSEL. Phosphoserine occurs at positions 331 and 345. The segment at 333 to 363 is disordered; sequence LGGAGSSRRRRTSSTARSASPLALCSRPEEP.

It belongs to the G-protein coupled receptor 1 family. In terms of processing, phosphorylated. Widespread expression. High expression in stomach, small intestine, heart and thymus. Intermediate expression in colon, spinal cord and peripheral blood and low expression in brain, skeletal muscle and spleen. Expressed also on Th2- and Tc2- type cells, eosinophils and basophils.

It localises to the cell membrane. Functionally, receptor for prostaglandin D2 (PGD2). Coupled to the G(i)-protein. Receptor activation may result in pertussis toxin-sensitive decreases in cAMP levels and Ca(2+) mobilization. PI3K signaling is also implicated in mediating PTGDR2 effects. PGD2 induced receptor internalization. CRTH2 internalization can be regulated by diverse kinases such as, PKC, PKA, GRK2, GPRK5/GRK5 and GRK6. Receptor activation is responsible, at least in part, in immune regulation and allergic/inflammation responses. This Homo sapiens (Human) protein is Prostaglandin D2 receptor 2 (PTGDR2).